A 198-amino-acid polypeptide reads, in one-letter code: Chitin synthase 2 (198 aa).

This sequence belongs to the chitin synthase family. Class III subfamily.

The protein localises to the cell membrane. The catalysed reaction is [(1-&gt;4)-N-acetyl-beta-D-glucosaminyl](n) + UDP-N-acetyl-alpha-D-glucosamine = [(1-&gt;4)-N-acetyl-beta-D-glucosaminyl](n+1) + UDP + H(+). Polymerizes chitin, a structural polymer of the cell wall and septum, by transferring the sugar moiety of UDP-GlcNAc to the non-reducing end of the growing chitin polymer. In Rhinocladiella atrovirens, this protein is Chitin synthase 2 (CHS2).